A 224-amino-acid chain; its full sequence is Pyridoxal 5'-phosphate synthase subunit SNO1 (224 aa).

67–69 is an L-glutamine binding site; it reads GES. Catalysis depends on cysteine 100, which acts as the Nucleophile. L-glutamine is bound by residues arginine 129 and 160 to 161; that span reads IR. Residues histidine 203 and glutamate 205 each act as charge relay system in the active site.

The protein belongs to the glutaminase PdxT/SNO family.

The enzyme catalyses aldehydo-D-ribose 5-phosphate + D-glyceraldehyde 3-phosphate + L-glutamine = pyridoxal 5'-phosphate + L-glutamate + phosphate + 3 H2O + H(+). It catalyses the reaction L-glutamine + H2O = L-glutamate + NH4(+). Its pathway is cofactor biosynthesis; pyridoxal 5'-phosphate biosynthesis. Catalyzes the hydrolysis of glutamine to glutamate and ammonia as part of the biosynthesis of pyridoxal 5'-phosphate. The resulting ammonia molecule is channeled to the active site of a SNZ isoform. This is Pyridoxal 5'-phosphate synthase subunit SNO1 (SNO1) from Saccharomyces cerevisiae (strain ATCC 204508 / S288c) (Baker's yeast).